The primary structure comprises 1310 residues: Clustered mitochondria protein homolog (1310 aa).

The 245-residue stretch at 375 to 619 (DITRSQESYL…RVTPLDVVWQ (245 aa)) folds into the Clu domain. A compositionally biased stretch (basic and acidic residues) spans 662–682 (KAQEDAANKEQPSETTESKEG). Disordered regions lie at residues 662-692 (KAQE…EEAL) and 931-960 (VANG…SRAV). 3 TPR repeats span residues 1033–1066 (AKLY…TERT), 1075–1108 (ILAY…WKII), and 1117–1150 (ITTM…CESL). Disordered stretches follow at residues 1245-1266 (VQPQ…ANAS) and 1281-1310 (GGDA…KSSA).

Belongs to the CLU family. May associate with the eukaryotic translation initiation factor 3 (eIF-3) complex.

The protein resides in the cytoplasm. MRNA-binding protein involved in proper cytoplasmic distribution of mitochondria. The protein is Clustered mitochondria protein homolog of Aspergillus fumigatus (strain CBS 144.89 / FGSC A1163 / CEA10) (Neosartorya fumigata).